The sequence spans 608 residues: Sensor protein kinase WalK (608 aa).

Transmembrane regions (helical) follow at residues 14 to 34 (LVIV…LYFT) and 182 to 202 (IFII…FFIA). An HAMP domain is found at 203–255 (RTITRPITDMRNQTVEMSKGNYTQRVKIYGNDEIGELALAFNNLSKRVQEAQA). The region spanning 260–330 (EKRRLDSVIT…EIQENNDSFL (71 aa)) is the PAS domain. The PAC domain occupies 324 to 377 (ENNDSFLLDINEDEGIIARVNFSTIVQETGFVTGYIAVLHDVTEQQQVERERRE). The Histidine kinase domain occupies 381–599 (NVSHELRTPL…SIFITLPCEV (219 aa)). Phosphohistidine; by autocatalysis is present on histidine 384.

In terms of processing, autophosphorylated.

The protein resides in the cell membrane. It catalyses the reaction ATP + protein L-histidine = ADP + protein N-phospho-L-histidine.. Functionally, member of the two-component regulatory system WalK/WalR. WalK functions as a sensor protein kinase which is autophosphorylated at a histidine residue and transfers its phosphate group to WalR. This chain is Sensor protein kinase WalK (walK), found in Staphylococcus haemolyticus (strain JCSC1435).